The primary structure comprises 528 residues: Probable serine/threonine-protein kinase DDB_G0282417 (528 aa).

Low complexity predominate over residues 49 to 77 (NNNNNNNNNNNNNNNNNNNNNNNNNNKNN). A disordered region spans residues 49 to 84 (NNNNNNNNNNNNNNNNNNNNNNNNNNKNNNDGDDAA). Residues 136–466 (QQNRVLIGEG…ESLINNHQYS (331 aa)) enclose the Protein kinase domain. Residues 142-150 (IGEGHYGKV) and Lys-166 contribute to the ATP site. Catalysis depends on Asp-266, which acts as the Proton acceptor.

It belongs to the protein kinase superfamily. Ser/Thr protein kinase family.

The enzyme catalyses L-seryl-[protein] + ATP = O-phospho-L-seryl-[protein] + ADP + H(+). It carries out the reaction L-threonyl-[protein] + ATP = O-phospho-L-threonyl-[protein] + ADP + H(+). This chain is Probable serine/threonine-protein kinase DDB_G0282417, found in Dictyostelium discoideum (Social amoeba).